The chain runs to 157 residues: Large ribosomal subunit protein uL13m (157 aa).

The transit peptide at methionine 1 to leucine 29 directs the protein to the mitochondrion.

This sequence belongs to the universal ribosomal protein uL13 family. Component of the mitochondrial large ribosomal subunit (mt-LSU). Mature yeast 74S mitochondrial ribosomes consist of a small (37S) and a large (54S) subunit. The 37S small subunit contains a 15S ribosomal RNA (15S mt-rRNA) and at least 32 different proteins. The 54S large subunit contains a 21S rRNA (21S mt-rRNA) and at least 45 different proteins.

It localises to the mitochondrion. In terms of biological role, component of the mitochondrial ribosome (mitoribosome), a dedicated translation machinery responsible for the synthesis of mitochondrial genome-encoded proteins, including at least some of the essential transmembrane subunits of the mitochondrial respiratory chain. The mitoribosomes are attached to the mitochondrial inner membrane and translation products are cotranslationally integrated into the membrane. This is Large ribosomal subunit protein uL13m from Schizosaccharomyces pombe (strain 972 / ATCC 24843) (Fission yeast).